Here is a 252-residue protein sequence, read N- to C-terminus: MDVKSVLSNAFAMPITSPAFPMGPYRFINREFLIITYRTDPDKLRAVVPEPLEIGEPLVHYEFIRMPDSTGFGDYTESGQVIPVSYKGVAGGYTLAMYLDDHPPIAGGRELWGFPKKLANPVLAVHTDTLVGTLDYGPVRIATGTMGYKHRQLDLAQQKKRLETPNFLLKVIPHVDGTPRICELVRYYLQDIDLKGAWTGPAALELAPHALAPVAALPVLEVVEARHLIADLTLGLGEVVFDYLGQPQANAR.

The Schiff-base intermediate with acetoacetate role is filled by K116.

This sequence belongs to the ADC family.

The catalysed reaction is acetoacetate + H(+) = acetone + CO2. In terms of biological role, catalyzes the conversion of acetoacetate to acetone and carbon dioxide. This Paraburkholderia xenovorans (strain LB400) protein is Acetoacetate decarboxylase.